The following is a 527-amino-acid chain: Bifunctional purine biosynthesis protein PurH (527 aa).

The region spanning 8-156 (AGAKRPIRRA…KNHPSVAVVV (149 aa)) is the MGS-like domain.

Belongs to the PurH family.

The enzyme catalyses (6R)-10-formyltetrahydrofolate + 5-amino-1-(5-phospho-beta-D-ribosyl)imidazole-4-carboxamide = 5-formamido-1-(5-phospho-D-ribosyl)imidazole-4-carboxamide + (6S)-5,6,7,8-tetrahydrofolate. It carries out the reaction IMP + H2O = 5-formamido-1-(5-phospho-D-ribosyl)imidazole-4-carboxamide. It functions in the pathway purine metabolism; IMP biosynthesis via de novo pathway; 5-formamido-1-(5-phospho-D-ribosyl)imidazole-4-carboxamide from 5-amino-1-(5-phospho-D-ribosyl)imidazole-4-carboxamide (10-formyl THF route): step 1/1. It participates in purine metabolism; IMP biosynthesis via de novo pathway; IMP from 5-formamido-1-(5-phospho-D-ribosyl)imidazole-4-carboxamide: step 1/1. This is Bifunctional purine biosynthesis protein PurH from Mycobacterium sp. (strain KMS).